Here is a 938-residue protein sequence, read N- to C-terminus: Catenin delta-1 (938 aa).

N-acetylmethionine is present on M1. Residues 1 to 357 (MDDSEVESTA…ASLDSLRKGM (357 aa)) are necessary and sufficient for interaction with CCDC85B. S4 carries the phosphoserine modification. The stretch at 10-46 (ASILASVKEQEAQFEKLTRALEEERRHVSAQLERVRV) forms a coiled coil. Residue S47 is modified to Phosphoserine. A Phosphothreonine modification is found at T59. The residue at position 112 (Y112) is a Phosphotyrosine; by FYN. The residue at position 125 (S125) is a Phosphoserine. Phosphotyrosine is present on residues Y217 and Y221. S225 is modified (phosphoserine). Y228 bears the Phosphotyrosine mark. Phosphoserine occurs at positions 230 and 252. At Y257 the chain carries Phosphotyrosine. Residues S268 and S269 each carry the phosphoserine modification. Y280 carries the phosphotyrosine modification. S288 carries the post-translational modification Phosphoserine. Phosphotyrosine is present on Y291. S300 carries the phosphoserine modification. T304 bears the Phosphothreonine mark. S320, S346, S349, and S352 each carry phosphoserine. ARM repeat units follow at residues 358–395 (PPPS…HLCY), 398–437 (DKVK…NISF), 441–475 (QDNK…ITGT), and 476–516 (LWNL…NEDC). K421 participates in a covalent cross-link: Glycyl lysine isopeptide (Lys-Gly) (interchain with G-Cter in SUMO2). A Glycyl lysine isopeptide (Lys-Gly) (interchain with G-Cter in SUMO2) cross-link involves residue K517. 6 ARM repeats span residues 534–573 (LRNV…DSDS), 583–624 (LRNL…AKKG), 653–693 (ARGY…NLCA), 700–739 (RYIR…NLAV), 740–780 (DARN…SILN), and 781–826 (TINE…ALVL). At S617 the chain carries Phosphoserine. Residues 622–629 (KKGKDEWF) carry the Nuclear localization signal (NLS) motif. S713 carries the phosphoserine modification. 6 positions are modified to phosphoserine: S811, S847, S857, S859, S861, and S864. A disordered region spans residues 855-938 (NASRSQSSHS…LKGAPLMQKI (84 aa)). Y865 bears the Phosphotyrosine mark. S868 is modified (phosphoserine). T869 carries the phosphothreonine modification. A compositionally biased stretch (basic and acidic residues) spans 875-888 (RNQKSDKKPDREEI). S879 is modified (phosphoserine). Residue K882 forms a Glycyl lysine isopeptide (Lys-Gly) (interchain with G-Cter in SUMO2) linkage. Residues 892–908 (NMGSNTKSLDNNYSTLN) are compositionally biased toward polar residues. Residue S899 is modified to Phosphoserine. Y904 is modified (phosphotyrosine). Phosphothreonine is present on residues T906 and T916. Residues 909–922 (ERGDHNRTLDRSGD) show a composition bias toward basic and acidic residues. Residue S920 is modified to Phosphoserine.

This sequence belongs to the beta-catenin family. In terms of assembly, belongs to a multiprotein cell-cell adhesion complex that also contains E-cadherin/CDH1, alpha-catenin/CTNNA1, beta-catenin/CTNNB1, and gamma-catenin/JUP. Binds to the C-terminal fragment of PSEN1 and mutually competes for CDH1. Interacts with ZBTB33. Interacts with GLIS2. Interacts with FER. Interacts with NANOS1 (via N-terminal region). Interacts (via N-terminus) with GNA12; the interaction regulates CDH1-mediated cell-cell adhesion. Interacts with GNA13. Component of a cadherin:catenin adhesion complex composed of at least of CDH26, beta-catenin/CTNNB1, alpha-catenin/CTNNA1 and p120 catenin/CTNND1. Interacts with CCDC85B. Interacts with PLPP3; negatively regulates the PLPP3-mediated stabilization of CTNNB1. Interacts with DSG3; the interaction facilitates DSG3 localization and retention at cell-cell junctions. Interacts with CTNND1/p120-catenin; the interaction controls CADH5 endocytosis. In terms of processing, phosphorylated by FER and other protein-tyrosine kinases. Phosphorylated at Ser-288 by PAK5. Dephosphorylated by PTPRJ. As to expression, expressed in basal keratinocytes (at protein level).

Its subcellular location is the cell junction. The protein localises to the adherens junction. The protein resides in the cytoplasm. It localises to the nucleus. It is found in the cell membrane. Key regulator of cell-cell adhesion that associates with and regulates the cell adhesion properties of both C-, E- and N-cadherins, being critical for their surface stability. Promotes localization and retention of DSG3 at cell-cell junctions, via its interaction with DSG3. Beside cell-cell adhesion, regulates gene transcription through several transcription factors including ZBTB33/Kaiso2 and GLIS2, and the activity of Rho family GTPases and downstream cytoskeletal dynamics. Implicated both in cell transformation by SRC and in ligand-induced receptor signaling through the EGF, PDGF, CSF-1 and ERBB2 receptors. The protein is Catenin delta-1 (Ctnnd1) of Mus musculus (Mouse).